We begin with the raw amino-acid sequence, 359 residues long: Peptide chain release factor 1 (359 aa).

N5-methylglutamine is present on Q236.

It belongs to the prokaryotic/mitochondrial release factor family. In terms of processing, methylated by PrmC. Methylation increases the termination efficiency of RF1.

It is found in the cytoplasm. In terms of biological role, peptide chain release factor 1 directs the termination of translation in response to the peptide chain termination codons UAG and UAA. This chain is Peptide chain release factor 1, found in Streptococcus pyogenes serotype M18 (strain MGAS8232).